The primary structure comprises 500 residues: Probable cytosol aminopeptidase (500 aa).

Residues Lys261 and Asp266 each contribute to the Mn(2+) site. The active site involves Lys273. Mn(2+) contacts are provided by Asp284, Asp343, and Glu345. Residue Arg347 is part of the active site.

The protein belongs to the peptidase M17 family. The cofactor is Mn(2+).

The protein localises to the cytoplasm. The enzyme catalyses Release of an N-terminal amino acid, Xaa-|-Yaa-, in which Xaa is preferably Leu, but may be other amino acids including Pro although not Arg or Lys, and Yaa may be Pro. Amino acid amides and methyl esters are also readily hydrolyzed, but rates on arylamides are exceedingly low.. The catalysed reaction is Release of an N-terminal amino acid, preferentially leucine, but not glutamic or aspartic acids.. Presumably involved in the processing and regular turnover of intracellular proteins. Catalyzes the removal of unsubstituted N-terminal amino acids from various peptides. The polypeptide is Probable cytosol aminopeptidase (pepA) (Bacillus subtilis (strain 168)).